We begin with the raw amino-acid sequence, 90 residues long: MANIKSSEKDIRRTKRRNAANSQNRSRLRTQAKKILKAIKEKDPKAAMALFIEYTSFLDKAAKTNLIHSKNADRKKSRMAKRLNAVSAAA.

The segment covering 1 to 11 (MANIKSSEKDI) has biased composition (basic and acidic residues). 2 disordered regions span residues 1–29 (MANI…SRLR) and 69–90 (SKNA…SAAA).

This sequence belongs to the bacterial ribosomal protein bS20 family.

Its function is as follows. Binds directly to 16S ribosomal RNA. This chain is Small ribosomal subunit protein bS20, found in Leptospira borgpetersenii serovar Hardjo-bovis (strain L550).